The sequence spans 249 residues: Segregation and condensation protein A (249 aa).

It belongs to the ScpA family. In terms of assembly, component of a cohesin-like complex composed of ScpA, ScpB and the Smc homodimer, in which ScpA and ScpB bind to the head domain of Smc. The presence of the three proteins is required for the association of the complex with DNA.

Its subcellular location is the cytoplasm. Participates in chromosomal partition during cell division. May act via the formation of a condensin-like complex containing Smc and ScpB that pull DNA away from mid-cell into both cell halves. The chain is Segregation and condensation protein A from Listeria welshimeri serovar 6b (strain ATCC 35897 / DSM 20650 / CCUG 15529 / CIP 8149 / NCTC 11857 / SLCC 5334 / V8).